A 458-amino-acid chain; its full sequence is uncharacterized protein (458 aa).

The protein belongs to the glycerate kinase type-2 family.

This is an uncharacterized protein from Caenorhabditis elegans.